We begin with the raw amino-acid sequence, 456 residues long: Frizzled/smoothened-like sans CRD protein F (456 aa).

Residues 1-30 form the signal peptide; the sequence is MIFNNLKNQNKIINFLIIFYFLSFLKQIES. Over 31–92 the chain is Extracellular; it reads QSINITSSSS…PFFTINEWNK (62 aa). N-linked (GlcNAc...) asparagine glycosylation is found at Asn-34, Asn-52, and Asn-70. The chain crosses the membrane as a helical span at residues 93–113; the sequence is FLNMSLVMGTISFFSGLFLLV. Residues 114–127 lie on the Cytoplasmic side of the membrane; the sequence is TYSPIVNKTHNRHT. The chain crosses the membrane as a helical span at residues 128–148; it reads IGVMCMSFGVCLAMCSDMWNF. Residues 149–174 lie on the Extracellular side of the membrane; that stretch reads GSNFTEKSICPSPGQYLSTSNARCLS. A glycan (N-linked (GlcNAc...) asparagine) is linked at Asn-151. The chain crosses the membrane as a helical span at residues 175-195; it reads SGIFLQFGGVFGFLNWTLLSF. The Cytoplasmic portion of the chain corresponds to 196-211; that stretch reads DLFMNIKGIITKNYDK. A helical membrane pass occupies residues 212–232; sequence YYVSGTFIIAIIFTFVPIVND. Topologically, residues 233–252 are extracellular; that stretch reads QYSMSYIGLGCWLGSAMYQL. Residues 253–273 form a helical membrane-spanning segment; sequence IFFWILLSICLIVSSVFIILI. Residues 274 to 297 lie on the Cytoplasmic side of the membrane; that stretch reads LKEVYIIIKLSKQKTSLKGNIRPL. A helical transmembrane segment spans residues 298 to 318; that stretch reads ICISITGFAFFYMFFYYISIV. Residues 319-354 are Extracellular-facing; that stretch reads VEGDYYERVLNEYTDCLMDPTKDISECKSPRMSVAS. A helical transmembrane segment spans residues 355-375; it reads EFVFLLCLRLLGIGAFIFYGI. The Cytoplasmic portion of the chain corresponds to 376–456; it reads NNKVKKIWLN…ESSLNSVDEI (81 aa). A disordered region spans residues 403–422; sequence ADNDKSNSNGSKVLYRTNNT.

It belongs to the G-protein coupled receptor Fz/Smo family.

The protein localises to the membrane. This chain is Frizzled/smoothened-like sans CRD protein F (fscF), found in Dictyostelium discoideum (Social amoeba).